Here is a 1488-residue protein sequence, read N- to C-terminus: Chromosome partition protein MukB (1488 aa).

34–41 serves as a coordination point for ATP; that stretch reads GGNGAGKS. Coiled-coil stretches lie at residues 326–418, 444–472, and 509–602; these read LEAD…QYNQ, LDTF…QTAH, and RHLA…RRAP. The tract at residues 666 to 783 is flexible hinge; sequence PGGAEDQRLN…SLPIFGRAAR (118 aa). Coiled coils occupy residues 835–923, 977–1116, and 1209–1265; these read EAEI…AKLE, EMLS…AKAG, and VEAI…LQSV. The disordered stretch occupies residues 1049-1074; that stretch reads ADSGAEERARQRRDELHAQLSNNRSR. Residues 1051-1065 are compositionally biased toward basic and acidic residues; the sequence is SGAEERARQRRDELH.

It belongs to the SMC family. MukB subfamily. As to quaternary structure, homodimerization via its hinge domain. Binds to DNA via its C-terminal region. Interacts, and probably forms a ternary complex, with MukE and MukF via its C-terminal region. The complex formation is stimulated by calcium or magnesium. Interacts with tubulin-related protein FtsZ.

The protein localises to the cytoplasm. The protein resides in the nucleoid. In terms of biological role, plays a central role in chromosome condensation, segregation and cell cycle progression. Functions as a homodimer, which is essential for chromosome partition. Involved in negative DNA supercoiling in vivo, and by this means organize and compact chromosomes. May achieve or facilitate chromosome segregation by condensation DNA from both sides of a centrally located replisome during cell division. The polypeptide is Chromosome partition protein MukB (Salmonella heidelberg (strain SL476)).